The primary structure comprises 1412 residues: DNA-directed RNA polymerase subunit beta' (1412 aa).

Cys-70, Cys-72, Cys-85, and Cys-88 together coordinate Zn(2+). Mg(2+) contacts are provided by Asp-460, Asp-462, and Asp-464. The Zn(2+) site is built by Cys-819, Cys-893, Cys-900, and Cys-903. Residues 1391–1412 (AEESFEFGTPETPAAEQQHSGE) are disordered.

This sequence belongs to the RNA polymerase beta' chain family. The RNAP catalytic core consists of 2 alpha, 1 beta, 1 beta' and 1 omega subunit. When a sigma factor is associated with the core the holoenzyme is formed, which can initiate transcription. Requires Mg(2+) as cofactor. It depends on Zn(2+) as a cofactor.

It carries out the reaction RNA(n) + a ribonucleoside 5'-triphosphate = RNA(n+1) + diphosphate. In terms of biological role, DNA-dependent RNA polymerase catalyzes the transcription of DNA into RNA using the four ribonucleoside triphosphates as substrates. This is DNA-directed RNA polymerase subunit beta' from Paraburkholderia phytofirmans (strain DSM 17436 / LMG 22146 / PsJN) (Burkholderia phytofirmans).